The following is a 1135-amino-acid chain: Retinoblastoma-like protein 2 (1135 aa).

Residues 1-43 form a disordered region; it reads MASGGNQSPPPPPAAAASSEEEEEDGDAADRAQPAGSPSHQIQ. The residue at position 410 (Ser410) is a Phosphoserine. At Thr414 the chain carries Phosphothreonine. The domain A stretch occupies residues 414–613; the sequence is TPVSTAAHSL…DRIRDNENRV (200 aa). Residues 414 to 1021 are pocket; binds E1A; the sequence is TPVSTAAHSL…QAFAMKYSQA (608 aa). Ser417 is a glycosylation site (O-linked (GlcNAc) serine). Residues 614-824 are spacer; sequence PTCEEVMPPQ…PGQPLTSSSI (211 aa). The residue at position 636 (Ser636) is a Phosphoserine. At Thr639 the chain carries Phosphothreonine. Phosphoserine is present on residues Ser659, Ser669, Ser684, Ser942, Ser946, Ser960, Ser965, and Ser967. Polar residues-rich tracts occupy residues 661 to 674, 683 to 692, 935 to 950, and 958 to 969; these read TTLY…TVST, DSPSEGSTSG, SGSS…PTEL, and DSSPVMRSNSTL. Disordered regions lie at residues 661-698 and 930-994; these read TTLY…PPQP and GKRR…VEEE. The interval 825-1021 is domain B; sequence RPRKTSSLAL…QAFAMKYSQA (197 aa). At Thr968 the chain carries Phosphothreonine. Residues 971–981 show a composition bias toward pro residues; sequence VPQPSSAPPTP. Phosphoserine occurs at positions 975 and 976. Thr980 carries the phosphothreonine modification. 4 positions are modified to phosphoserine: Ser1031, Ser1064, Ser1076, and Ser1108.

The protein belongs to the retinoblastoma protein (RB) family. Interacts with AATF and RINT1. Component of the DREAM complex (also named LINC complex) at least composed of E2F4, E2F5, LIN9, LIN37, LIN52, LIN54, MYBL1, MYBL2, RBL1, RBL2, RBBP4, TFDP1 and TFDP2. The complex exists in quiescent cells where it represses cell cycle-dependent genes. It dissociates in S phase when LIN9, LIN37, LIN52 and LIN54 form a subcomplex that binds to MYBL2. Interacts with USP4. Interacts with KMT5B, KMT5C and USP4. Interacts with PML. Interacts with RBBP9. Interacts with CD53. In terms of processing, during G0 and early G1 phase of the cell cycle, phosphorylated on Ser-636 and on 5 sites within the domain B. Phosphorylation on Ser-669 in G1 leads to its ubiquitin-dependent proteolysis.

The protein resides in the nucleus. In terms of biological role, key regulator of entry into cell division. Directly involved in heterochromatin formation by maintaining overall chromatin structure and, in particular, that of constitutive heterochromatin by stabilizing histone methylation. Recruits and targets histone methyltransferases KMT5B and KMT5C, leading to epigenetic transcriptional repression. Controls histone H4 'Lys-20' trimethylation. Probably acts as a transcription repressor by recruiting chromatin-modifying enzymes to promoters. Potent inhibitor of E2F-mediated trans-activation, associates preferentially with E2F5. Binds to cyclins A and E. Binds to and may be involved in the transforming capacity of the adenovirus E1A protein. May act as a tumor suppressor. The protein is Retinoblastoma-like protein 2 (Rbl2) of Mus musculus (Mouse).